We begin with the raw amino-acid sequence, 552 residues long: CCR4-NOT transcription complex subunit 6 (552 aa).

LRR repeat units lie at residues 52–73, 75–96, 98–120, and 121–143; these read HLTALHLSDNSLSCIPSDIAKL, NLVYLDLSHNQIQSLPAELGNM, SLRELHLNYNQLRVLPFELGKLF, and QLQTLSLKGNPLTQDILNLCLEP. The interval 153-552 is nuclease domain; that stretch reads LLDNLSVSTE…VNGIHLPGRR (400 aa). Glu-235 provides a ligand contact to Mg(2+). Glu-235, Glu-271, His-356, and Pro-361 together coordinate substrate. Residue Asp-407 participates in Mg(2+) binding. The active-site Proton donor/acceptor is the Asp-407. 3 residues coordinate substrate: Asn-409, Asn-476, and Phe-481.

This sequence belongs to the CCR4/nocturin family. Subunit of the CCR4-NOT core complex. Mg(2+) is required as a cofactor.

It is found in the cytoplasm. Its subcellular location is the nucleus. It catalyses the reaction Exonucleolytic cleavage of poly(A) to 5'-AMP.. Its function is as follows. Poly(A) nuclease involved in mRNA decay. Has 3'-5' RNase activity. The CCR4-NOT complex functions as a general transcription regulation complex. Enhances ligand-dependent transcriptional activity of nuclear hormone receptors. The sequence is that of CCR4-NOT transcription complex subunit 6 (cnot6) from Xenopus laevis (African clawed frog).